We begin with the raw amino-acid sequence, 528 residues long: MTDACCLKGNEDKMVPRFGHGTWIGKAFNDTPEMLHERSLRQEKRLERANELMNDDSLQKLETAAMARSRSVDSAPLGNYTIWKNEYRRGKSFEDMLRLMQDQIIMARVYSGLAKFTNNLALHQEIETQLMKLAWEEESTDIDQEQRVLDSIRDMGQILARAHEQLYECKLVTNKLRAMLQTVEDELENEQTYITFLTQLASKALPDAIHCLTMRLNLEYHLLPLPMRNFPRRENLENPKLYHYALFSDNVLAASVVVNSTVMNAQDPSRHVFHLVTDKLNFGAMSMWFLLNPPGEATIHVQRFEDFTWLNSSYSPVLSQLESAAMKKFYFKTARSESVESGSENLKYRYPKYMSMLNHLRFYIPRIFPKLEKILFVDDDVVVQKDLTPLWSIDLKGKVNENFDPKFCGWAYGMNIFDLKEWKKNNITETYHFWQNLNENRTLWKLGTLPPGLITFYNLTQPLQRKWHLLGLGYDKGIDVKKIERSAVIHYNGHMKPWTEMGISKYQPYWTKYTNFDHPYIFTCRLFE.

This sequence belongs to the glycosyltransferase 8 family.

It functions in the pathway glycan metabolism; pectin biosynthesis. May be involved in pectin and/or xylans biosynthesis in cell walls. The sequence is that of Putative galacturonosyltransferase 2 (GAUT2) from Arabidopsis thaliana (Mouse-ear cress).